A 149-amino-acid polypeptide reads, in one-letter code: Large ribosomal subunit protein uL22c (149 aa).

It belongs to the universal ribosomal protein uL22 family. In terms of assembly, part of the 50S ribosomal subunit.

It localises to the plastid. It is found in the chloroplast. Functionally, this protein binds specifically to 23S rRNA. In terms of biological role, the globular domain of the protein is located near the polypeptide exit tunnel on the outside of the subunit, while an extended beta-hairpin is found that lines the wall of the exit tunnel in the center of the 70S ribosome. The polypeptide is Large ribosomal subunit protein uL22c (rpl22) (Oryza nivara (Indian wild rice)).